A 685-amino-acid chain; its full sequence is DNA ligase (685 aa).

Residues 48 to 52 (DAEYD), 97 to 98 (SL), and E131 each bind NAD(+). The N6-AMP-lysine intermediate role is filled by K133. NAD(+) is bound by residues R154, E190, K304, and K328. C422, C425, C440, and C445 together coordinate Zn(2+). Positions 603–685 (PEEGPLSGRR…RLLSGEERPG (83 aa)) constitute a BRCT domain.

It belongs to the NAD-dependent DNA ligase family. LigA subfamily. It depends on Mg(2+) as a cofactor. The cofactor is Mn(2+).

The catalysed reaction is NAD(+) + (deoxyribonucleotide)n-3'-hydroxyl + 5'-phospho-(deoxyribonucleotide)m = (deoxyribonucleotide)n+m + AMP + beta-nicotinamide D-nucleotide.. DNA ligase that catalyzes the formation of phosphodiester linkages between 5'-phosphoryl and 3'-hydroxyl groups in double-stranded DNA using NAD as a coenzyme and as the energy source for the reaction. It is essential for DNA replication and repair of damaged DNA. This is DNA ligase from Rubrobacter xylanophilus (strain DSM 9941 / JCM 11954 / NBRC 16129 / PRD-1).